The primary structure comprises 987 residues: UvrABC system protein A (987 aa).

ATP is bound at residue 33–40 (GLSGSGKS). Residues 255–282 (CPVCDYSLPELEPRLFSFNAPVGACPSC) form a C4-type zinc finger. 2 ABC transporter domains span residues 312–589 (WDRR…PRSL) and 609–938 (PNPK…QFLA). 642-649 (GVSGSGKS) is a binding site for ATP. Residues 741–767 (CEACQGDGMIKVEMHFLPDVYVPCDVC) form a C4-type zinc finger. Residues 948–987 (ETRPAAMANKPDARPPRKVKPEKVAKAAKSATKKTAKKAS) are disordered. The segment covering 958–972 (PDARPPRKVKPEKVA) has biased composition (basic and acidic residues). A compositionally biased stretch (basic residues) spans 978–987 (ATKKTAKKAS).

The protein belongs to the ABC transporter superfamily. UvrA family. In terms of assembly, forms a heterotetramer with UvrB during the search for lesions.

The protein localises to the cytoplasm. Its function is as follows. The UvrABC repair system catalyzes the recognition and processing of DNA lesions. UvrA is an ATPase and a DNA-binding protein. A damage recognition complex composed of 2 UvrA and 2 UvrB subunits scans DNA for abnormalities. When the presence of a lesion has been verified by UvrB, the UvrA molecules dissociate. This Xanthomonas axonopodis pv. citri (strain 306) protein is UvrABC system protein A.